The following is a 328-amino-acid chain: uncharacterized protein (328 aa).

A signal peptide spans 1–32; sequence MFNFRLFSRRGKSLGLLAIVLLLFGFYSLKSS.

It belongs to the glycosyltransferase 34 family.

Its subcellular location is the endoplasmic reticulum. This is an uncharacterized protein from Schizosaccharomyces pombe (strain 972 / ATCC 24843) (Fission yeast).